The following is a 43-amino-acid chain: CLAVATA3/ESR (CLE)-related protein 16D10 (43 aa).

Residues 1 to 30 (MFTNSIKNLIIYLMPLMVTLMLLSVSFVDA) form the signal peptide. The CLE motif lies at 31 to 43 (GKKPSGPNPGGNN).

The protein belongs to the CLV3/ESR signal peptide family. In terms of tissue distribution, highly expressed exclusively within the subventral esophageal gland cell during syncytium formation in host plants.

The protein localises to the secreted. It localises to the host cytoplasm. Its subcellular location is the host extracellular space. In terms of biological role, plays a role in the differentiation or division of feeding cells (syncytia) induced in plant roots during infection. Promotes host root growth. The protein is CLAVATA3/ESR (CLE)-related protein 16D10 (16D10) of Meloidogyne arenaria (Peanut root-knot nematode).